Here is a 774-residue protein sequence, read N- to C-terminus: Probable ubiquitin-like-specific protease 2A (774 aa).

The interval 118 to 141 (SSLSENDEVSTGEATNPASDPHEV) is disordered. Active-site residues include His400, Asp430, and Cys485. Residues 548–568 (ILPANSKSEPPHCGVSNRNDQ) are disordered.

The protein belongs to the peptidase C48 family.

In terms of biological role, protease that catalyzes two essential functions in the SUMO pathway: processing of full-length SUMOs to their mature forms and deconjugation of SUMO from targeted proteins. The protein is Probable ubiquitin-like-specific protease 2A (ULP2A) of Arabidopsis thaliana (Mouse-ear cress).